Here is a 341-residue protein sequence, read N- to C-terminus: MDLVNDLILRAARGEPTPRPPVWFMRQAGRYQKAYRKLRERYTLPEIVQNPEVCAEVTLLPVKALGVDAAILFADITTPLYGMGVDLSLVENKGPVIHNPVRDEKGVEALRPLVPEEAVPFVLETIRILKRELPVPLIGFAGAPFTLASYLVEGGPSRRFLRVKALMYGEEALWHRLMEKLTEAMARYLRAQAEAGADLLQVFDSWVGALSPADYRRYVKPHMERLFQSLRPAGVPVIHFGVGTMGLLEDMKEAGGDVLGLDHHTPLPWARALLGATPVQGNLDPAVLLAPKGVIRREVQRILKENGGKSGHIFNLGHGIVPETPEENVRYVVELIQEVAA.

Substrate-binding positions include 26 to 30 (RQAGR), D75, Y150, S205, and H318.

It belongs to the uroporphyrinogen decarboxylase family. As to quaternary structure, homodimer.

Its subcellular location is the cytoplasm. The enzyme catalyses uroporphyrinogen III + 4 H(+) = coproporphyrinogen III + 4 CO2. It functions in the pathway porphyrin-containing compound metabolism; protoporphyrin-IX biosynthesis; coproporphyrinogen-III from 5-aminolevulinate: step 4/4. Catalyzes the decarboxylation of four acetate groups of uroporphyrinogen-III to yield coproporphyrinogen-III. The chain is Uroporphyrinogen decarboxylase from Thermus thermophilus (strain ATCC BAA-163 / DSM 7039 / HB27).